The following is a 113-amino-acid chain: Small ribosomal subunit protein uS14m (113 aa).

This sequence belongs to the universal ribosomal protein uS14 family. As to quaternary structure, component of the mitochondrial small ribosomal subunit (mt-SSU). Mature N.crassa 74S mitochondrial ribosomes consist of a small (37S) and a large (54S) subunit. The 37S small subunit contains a 16S ribosomal RNA (16S mt-rRNA) and 32 different proteins. The 54S large subunit contains a 23S rRNA (23S mt-rRNA) and 42 different proteins.

The protein localises to the mitochondrion. Its function is as follows. Component of the mitochondrial ribosome (mitoribosome), a dedicated translation machinery responsible for the synthesis of mitochondrial genome-encoded proteins, including at least some of the essential transmembrane subunits of the mitochondrial respiratory chain. The mitoribosomes are attached to the mitochondrial inner membrane and translation products are cotranslationally integrated into the membrane. In Neurospora crassa (strain ATCC 24698 / 74-OR23-1A / CBS 708.71 / DSM 1257 / FGSC 987), this protein is Small ribosomal subunit protein uS14m (mrp2).